The chain runs to 1037 residues: Multidrug resistance protein MdtF (1037 aa).

Over 1 to 9 (MANYFIDRP) the chain is Cytoplasmic. A helical membrane pass occupies residues 10-30 (VFAWVLAIIMMLAGGLAIMNL). Topologically, residues 31–338 (PVAQYPQIAP…TTPFIKISIQ (308 aa)) are periplasmic. The helical transmembrane segment at 339-359 (EVFKTLVEAIILVFLVMYLFL) threads the bilayer. At 360-369 (QNFRATIIPT) the chain is on the cytoplasmic side. Residues 370–390 (IAVPVVILGTFAILSAVGFTI) traverse the membrane as a helical segment. Over 391 to 392 (NT) the chain is Periplasmic. A helical membrane pass occupies residues 393–413 (LTMFGMVLAIGLLVDDAIVVV). Topologically, residues 414–440 (ENVERVIAEDKLPPKEATHKSMGQIQR) are cytoplasmic. A helical transmembrane segment spans residues 441–461 (ALVGIAVVLSAVFMPMAFMSG). At 462–471 (ATGEIYRQFS) the chain is on the periplasmic side. The chain crosses the membrane as a helical span at residues 472 to 492 (ITLISSMLLSVFVAMSLTPAL). At 493-534 (CATILKAAPEGGHKPNALFARFNTLFEKSTQHYTDSTRSLLR) the chain is on the cytoplasmic side. Residues 535-555 (CTGRYMVVYLLICAGMAVLFL) form a helical membrane-spanning segment. Over 556 to 870 (RTPTSFLPEE…SYQEALSSNQ (315 aa)) the chain is Periplasmic. A helical membrane pass occupies residues 871 to 891 (APALYAISLVVVFLALAALYE). S892 is a topological domain (cytoplasmic). A helical transmembrane segment spans residues 893–913 (WSIPFSVMLVVPLGVVGALLA). Residues 914-927 (TDLRGLSNDVYFQV) are Periplasmic-facing. The helical transmembrane segment at 928-948 (GLLTTIGLSAKNAILIVEFAV) threads the bilayer. Topologically, residues 949 to 972 (EMMQKEGKTPVEAIIEAARMRLRP) are cytoplasmic. The chain crosses the membrane as a helical span at residues 973 to 993 (ILMTSLAFILGVLPLVISHGA). Residues 994 to 1006 (GSGAQNAVGTGVM) lie on the Periplasmic side of the membrane. Residues 1007–1027 (GGMFAATVLAIYFVPVFFVVV) form a helical membrane-spanning segment. The Cytoplasmic segment spans residues 1028-1037 (EHLFARFKKA).

It belongs to the resistance-nodulation-cell division (RND) (TC 2.A.6) family. As to quaternary structure, homotrimer. Part of the tripartite efflux system MdtEF-TolC, which is composed of an inner membrane transporter, MdtF, a membrane fusion protein, MdtE, and an outer membrane component, TolC. The complex forms a large protein conduit and can translocate molecules across both the inner and outer membranes.

It localises to the cell inner membrane. Its function is as follows. Part of the tripartite efflux system MdtEF-TolC, which confers resistance to various compounds. The polypeptide is Multidrug resistance protein MdtF (mdtF) (Escherichia coli O6:H1 (strain CFT073 / ATCC 700928 / UPEC)).